A 113-amino-acid chain; its full sequence is Hydrogenase maturation factor HypA (113 aa).

A Ni(2+)-binding site is contributed by His2. Zn(2+) contacts are provided by Cys73, Cys76, Cys89, and Cys92.

It belongs to the HypA/HybF family.

In terms of biological role, involved in the maturation of [NiFe] hydrogenases. Required for nickel insertion into the metal center of the hydrogenase. This Moorella thermoacetica (strain ATCC 39073 / JCM 9320) protein is Hydrogenase maturation factor HypA.